We begin with the raw amino-acid sequence, 408 residues long: Histidine--tRNA ligase (408 aa).

Belongs to the class-II aminoacyl-tRNA synthetase family. Homodimer.

It localises to the cytoplasm. The enzyme catalyses tRNA(His) + L-histidine + ATP = L-histidyl-tRNA(His) + AMP + diphosphate + H(+). This Wolbachia pipientis wMel protein is Histidine--tRNA ligase.